A 271-amino-acid polypeptide reads, in one-letter code: N-acylmannosamine 1-dehydrogenase (271 aa).

20-44 serves as a coordination point for NAD(+); it reads VTGAAGGIGRATVEAYLREGASVVA. Serine 153 lines the substrate pocket. The active-site Proton acceptor is the tyrosine 166.

It belongs to the short-chain dehydrogenases/reductases (SDR) family.

It catalyses the reaction an N-acyl-D-mannosamine + NAD(+) = an N-acyl-D-mannosaminolactone + NADH + H(+). Acts on acetyl-D-mannosamine and glycolyl-D-mannosamine. This is N-acylmannosamine 1-dehydrogenase from Flavobacterium sp. (strain 141-8).